The following is a 338-amino-acid chain: Aspartate carbamoyltransferase catalytic subunit (338 aa).

Carbamoyl phosphate-binding residues include arginine 59 and threonine 60. Residue lysine 87 participates in L-aspartate binding. 3 residues coordinate carbamoyl phosphate: arginine 109, histidine 142, and glutamine 145. L-aspartate is bound by residues arginine 182 and arginine 253. 2 residues coordinate carbamoyl phosphate: glycine 294 and proline 295.

Belongs to the aspartate/ornithine carbamoyltransferase superfamily. ATCase family. In terms of assembly, heterododecamer (2C3:3R2) of six catalytic PyrB chains organized as two trimers (C3), and six regulatory PyrI chains organized as three dimers (R2).

It catalyses the reaction carbamoyl phosphate + L-aspartate = N-carbamoyl-L-aspartate + phosphate + H(+). The protein operates within pyrimidine metabolism; UMP biosynthesis via de novo pathway; (S)-dihydroorotate from bicarbonate: step 2/3. In terms of biological role, catalyzes the condensation of carbamoyl phosphate and aspartate to form carbamoyl aspartate and inorganic phosphate, the committed step in the de novo pyrimidine nucleotide biosynthesis pathway. This chain is Aspartate carbamoyltransferase catalytic subunit, found in Prochlorococcus marinus (strain MIT 9515).